A 96-amino-acid chain; its full sequence is Co-chaperonin GroES (96 aa).

This sequence belongs to the GroES chaperonin family. In terms of assembly, heptamer of 7 subunits arranged in a ring. Interacts with the chaperonin GroEL.

The protein resides in the cytoplasm. In terms of biological role, together with the chaperonin GroEL, plays an essential role in assisting protein folding. The GroEL-GroES system forms a nano-cage that allows encapsulation of the non-native substrate proteins and provides a physical environment optimized to promote and accelerate protein folding. GroES binds to the apical surface of the GroEL ring, thereby capping the opening of the GroEL channel. The protein is Co-chaperonin GroES of Geobacter sp. (strain M21).